The primary structure comprises 89 residues: Large ribosomal subunit protein bL28 (89 aa).

It belongs to the bacterial ribosomal protein bL28 family.

In Chlamydia trachomatis serovar L2 (strain ATCC VR-902B / DSM 19102 / 434/Bu), this protein is Large ribosomal subunit protein bL28.